The following is a 1198-amino-acid chain: Phosphatidylinositol-3,5-bisphosphate 3-phosphatase MTMR3 (1198 aa).

Serine 8 carries the post-translational modification Phosphoserine. Residues 155 to 576 form the Myotubularin phosphatase domain; it reads EHVTSRFKNE…RNLMLWSAVY (422 aa). Residues 265–280 are compositionally biased toward polar residues; sequence SRSSGSKLSTRNTSRD. A disordered region spans residues 265–285; the sequence is SRSSGSKLSTRNTSRDFPNGG. Positions 326, 351, and 352 each coordinate a 1,2-diacyl-sn-glycero-3-phospho-(1D-myo-inositol-3,5-bisphosphate). A 1,2-diacyl-sn-glycero-3-phospho-(1D-myo-inositol-3-phosphate) is bound by residues asparagine 326, asparagine 351, and isoleucine 352. The active-site Phosphocysteine intermediate is the cysteine 413. Residues serine 414, aspartate 415, glycine 416, tryptophan 417, aspartate 418, arginine 419, lysine 455, and arginine 459 each coordinate a 1,2-diacyl-sn-glycero-3-phospho-(1D-myo-inositol-3,5-bisphosphate). Residues serine 414, aspartate 415, glycine 416, tryptophan 417, aspartate 418, and arginine 419 each coordinate a 1,2-diacyl-sn-glycero-3-phospho-(1D-myo-inositol-3-phosphate). An a 1,2-diacyl-sn-glycero-3-phospho-(1D-myo-inositol-3-phosphate)-binding site is contributed by arginine 459. Residues 590 to 612 are disordered; the sequence is CAPYPAPGTSPDDPPLSRLPKTR. The span at 593 to 603 shows a compositional bias: pro residues; that stretch reads YPAPGTSPDDP. 4 positions are modified to phosphoserine: serine 613, serine 633, serine 647, and serine 651. Disordered regions lie at residues 650–669, 716–735, and 855–891; these read LSSL…LGKP, EGKE…PEAS, and KSVS…SLVE. Over residues 716–732 the composition is skewed to basic and acidic residues; that stretch reads EGKEDPLLEKESRRKTP. Threonine 731 is subject to Phosphothreonine. Serine 906 and serine 909 each carry phosphoserine. Disordered stretches follow at residues 933–974 and 993–1019; these read ETEN…SRQL and WLHS…DDDG. Residues 999–1010 show a composition bias toward polar residues; the sequence is GRPSATSSPDQP. Positions 1029 to 1062 form a coiled coil; the sequence is QRLRQIESGHQQEVETLKKQVQELKSRLESQYLT. At serine 1064 the chain carries Phosphoserine. The FYVE-type zinc finger occupies 1119-1179; sequence DHLAAHCYAC…VCKSCYSSLH (61 aa). 8 residues coordinate Zn(2+): cysteine 1125, cysteine 1128, cysteine 1141, cysteine 1144, cysteine 1149, cysteine 1152, cysteine 1171, and cysteine 1174.

This sequence belongs to the protein-tyrosine phosphatase family. Non-receptor class myotubularin subfamily. As to quaternary structure, forms heterodimers with MTMR4 that recruit both CEP55 and PLK1; occurs during early mitosis, regulates the phosphorylation of CEP55 by PLK1 and its recruitment to the midbody where it mediates cell abscission. In terms of processing, phosphorylated by CDK1 during mitosis.

It localises to the cytoplasm. Its subcellular location is the cytosol. The protein resides in the membrane. It carries out the reaction a 1,2-diacyl-sn-glycero-3-phospho-(1D-myo-inositol-3,5-bisphosphate) + H2O = a 1,2-diacyl-sn-glycero-3-phospho-(1D-myo-inositol-5-phosphate) + phosphate. It catalyses the reaction a 1,2-diacyl-sn-glycero-3-phospho-(1D-myo-inositol-3-phosphate) + H2O = a 1,2-diacyl-sn-glycero-3-phospho-(1D-myo-inositol) + phosphate. The enzyme catalyses 1,2-dihexadecanoyl-sn-glycero-3-phospho-(1D-myo-inositol-3-phosphate) + H2O = 1,2-dihexadecanoyl-sn-glycero-3-phospho-(1D-myo-inositol) + phosphate. The catalysed reaction is 1,2-dioctanoyl-sn-glycero-3-phospho-(1-D-myo-inositol-3-phosphate) + H2O = 1,2-dioctanoyl-sn-glycero-3-phospho-(1D-myo-inositol) + phosphate. It carries out the reaction 1,2-dihexadecanoyl-sn-glycero-3-phospho-(1D-myo-inositol-3,5-phosphate) + H2O = 1,2-dihexadecanoyl-sn-glycero-3-phospho-(1D-myo-inositol-5-phosphate) + phosphate. Lipid phosphatase that specifically dephosphorylates the D-3 position of phosphatidylinositol 3-phosphate and phosphatidylinositol 3,5-bisphosphate, generating phosphatidylinositol and phosphatidylinositol 5-phosphate. Decreases the levels of phosphatidylinositol 3-phosphate, a phospholipid found in cell membranes where it acts as key regulator of both cell signaling and intracellular membrane traffic. Could also have a molecular sequestering/adapter activity and regulate biological processes independently of its phosphatase activity. It includes the regulation of midbody abscission during mitotic cytokinesis. This Homo sapiens (Human) protein is Phosphatidylinositol-3,5-bisphosphate 3-phosphatase MTMR3.